We begin with the raw amino-acid sequence, 877 residues long: Putative leucine-rich repeat receptor-like serine/threonine-protein kinase At2g19230 (877 aa).

The signal sequence occupies residues 1–24; it reads MGNFNFLPLVSFASFVVVLVLVCA. The Extracellular segment spans residues 25 to 517; it reads QDQSGFVSID…RNKKTERKEY (493 aa). 6 N-linked (GlcNAc...) asparagine glycosylation sites follow: asparagine 142, asparagine 233, asparagine 261, asparagine 295, asparagine 405, and asparagine 420. LRR repeat units lie at residues 439-462 and 463-484; these read PLQK…ANLP and DLTE…KLLE. The chain crosses the membrane as a helical span at residues 518-538; the sequence is IIPSVASVTGLFFLLLALISF. Residues 539 to 877 are Cytoplasmic-facing; the sequence is WQFKKRQQSV…VDPGVLPQPR (339 aa). In terms of domain architecture, Protein kinase spans 569 to 842; sequence NNFERVLGQG…QVVAELKESL (274 aa). Residues 575–583 and lysine 596 each bind ATP; that span reads LGQGGFGKV. Position 641 is a phosphotyrosine (tyrosine 641). The active-site Proton acceptor is aspartate 692. Serine 726 bears the Phosphoserine mark. 2 positions are modified to phosphothreonine: threonine 727 and threonine 732.

Belongs to the protein kinase superfamily. Ser/Thr protein kinase family.

Its subcellular location is the cell membrane. It carries out the reaction L-seryl-[protein] + ATP = O-phospho-L-seryl-[protein] + ADP + H(+). The catalysed reaction is L-threonyl-[protein] + ATP = O-phospho-L-threonyl-[protein] + ADP + H(+). The polypeptide is Putative leucine-rich repeat receptor-like serine/threonine-protein kinase At2g19230 (Arabidopsis thaliana (Mouse-ear cress)).